The primary structure comprises 356 residues: UDP-3-O-acylglucosamine N-acyltransferase (356 aa).

Residue H242 is the Proton acceptor of the active site.

It belongs to the transferase hexapeptide repeat family. LpxD subfamily. As to quaternary structure, homotrimer.

It catalyses the reaction a UDP-3-O-[(3R)-3-hydroxyacyl]-alpha-D-glucosamine + a (3R)-hydroxyacyl-[ACP] = a UDP-2-N,3-O-bis[(3R)-3-hydroxyacyl]-alpha-D-glucosamine + holo-[ACP] + H(+). It functions in the pathway bacterial outer membrane biogenesis; LPS lipid A biosynthesis. Functionally, catalyzes the N-acylation of UDP-3-O-acylglucosamine using 3-hydroxyacyl-ACP as the acyl donor. Is involved in the biosynthesis of lipid A, a phosphorylated glycolipid that anchors the lipopolysaccharide to the outer membrane of the cell. The sequence is that of UDP-3-O-acylglucosamine N-acyltransferase from Acinetobacter baumannii (strain AB0057).